A 53-amino-acid chain; its full sequence is UPF0391 membrane protein Bcep18194_C7021 (53 aa).

The next 2 helical transmembrane spans lie at 5–25 and 30–50; these read AVIFFIIAIVAAVFGFGGIAA and IAKILFYIFVVIFLVTLLLGV.

The protein belongs to the UPF0391 family.

The protein localises to the cell membrane. The polypeptide is UPF0391 membrane protein Bcep18194_C7021 (Burkholderia lata (strain ATCC 17760 / DSM 23089 / LMG 22485 / NCIMB 9086 / R18194 / 383)).